The following is a 757-amino-acid chain: 5-methyltetrahydropteroyltriglutamate--homocysteine methyltransferase (757 aa).

5-methyltetrahydropteroyltri-L-glutamate-binding positions include 17 to 20 (RELK) and Lys-117. Residues 434–436 (IGS) and Glu-487 contribute to the L-homocysteine site. Residues 434 to 436 (IGS) and Glu-487 each bind L-methionine. 5-methyltetrahydropteroyltri-L-glutamate-binding positions include 518–519 (RC) and Trp-564. Asp-602 serves as a coordination point for L-homocysteine. Asp-602 is a binding site for L-methionine. Residue Glu-608 participates in 5-methyltetrahydropteroyltri-L-glutamate binding. His-644, Cys-646, and Glu-668 together coordinate Zn(2+). Residue His-697 is the Proton donor of the active site. Cys-729 serves as a coordination point for Zn(2+).

The protein belongs to the vitamin-B12 independent methionine synthase family. The cofactor is Zn(2+).

The catalysed reaction is 5-methyltetrahydropteroyltri-L-glutamate + L-homocysteine = tetrahydropteroyltri-L-glutamate + L-methionine. It participates in amino-acid biosynthesis; L-methionine biosynthesis via de novo pathway; L-methionine from L-homocysteine (MetE route): step 1/1. Its function is as follows. Catalyzes the transfer of a methyl group from 5-methyltetrahydrofolate to homocysteine resulting in methionine formation. The polypeptide is 5-methyltetrahydropteroyltriglutamate--homocysteine methyltransferase (Proteus mirabilis (strain HI4320)).